Reading from the N-terminus, the 366-residue chain is Ribosomal RNA large subunit methyltransferase M (366 aa).

Residues S188, 221–224, D240, D260, and D277 each bind S-adenosyl-L-methionine; that span reads CPGG. The active-site Proton acceptor is K306.

This sequence belongs to the class I-like SAM-binding methyltransferase superfamily. RNA methyltransferase RlmE family. RlmM subfamily. Monomer.

It is found in the cytoplasm. The enzyme catalyses cytidine(2498) in 23S rRNA + S-adenosyl-L-methionine = 2'-O-methylcytidine(2498) in 23S rRNA + S-adenosyl-L-homocysteine + H(+). Its function is as follows. Catalyzes the 2'-O-methylation at nucleotide C2498 in 23S rRNA. The sequence is that of Ribosomal RNA large subunit methyltransferase M from Pectobacterium carotovorum subsp. carotovorum (strain PC1).